A 462-amino-acid polypeptide reads, in one-letter code: GTPase Der (462 aa).

EngA-type G domains are found at residues lysine 2–glutamate 164 and isoleucine 195–serine 366. Residues glycine 8–serine 15, aspartate 55–isoleucine 59, asparagine 116–aspartate 119, glycine 201–serine 208, aspartate 248–isoleucine 252, and asparagine 312–aspartate 315 each bind GTP. In terms of domain architecture, KH-like spans threonine 367–glycine 451.

Belongs to the TRAFAC class TrmE-Era-EngA-EngB-Septin-like GTPase superfamily. EngA (Der) GTPase family. As to quaternary structure, associates with the 50S ribosomal subunit.

In terms of biological role, GTPase that plays an essential role in the late steps of ribosome biogenesis. In Nitratiruptor sp. (strain SB155-2), this protein is GTPase Der.